An 840-amino-acid polypeptide reads, in one-letter code: Phosphatidylglycerol lysyltransferase (840 aa).

Residues 1-8 (MNQEVKNK) lie on the Cytoplasmic side of the membrane. A helical membrane pass occupies residues 9–29 (IFSILKITFATALFIFVVITL). At 30–52 (YRELSGINFKDTLVEFSKINRMS) the chain is on the extracellular side. A helical membrane pass occupies residues 53 to 73 (LVLLFIGGGASLVILSMYDVI). Residues 74–89 (LSRALKMDISLGKVLR) lie on the Cytoplasmic side of the membrane. The helical transmembrane segment at 90-110 (VSYIINALNAIVGFGGFIGAG) threads the bilayer. The Extracellular portion of the chain corresponds to 111–128 (VRAMVYKNYTHDKKKLVH). Residues 129-149 (FISLILISMLTGLSLLSLLIV) traverse the membrane as a helical segment. The Cytoplasmic segment spans residues 150–161 (FHVFDASLILNK). A helical membrane pass occupies residues 162–182 (ITWVRWVLYAVSLFLPLFIIY). At 183–200 (SMVRPPDKNNRYVGLYCT) the chain is on the extracellular side. The helical transmembrane segment at 201 to 221 (LVSCVEWLAAAVVLYFCGVIV) threads the bilayer. Residues 222–229 (DVHVSFMS) are Cytoplasmic-facing. Residues 230–250 (FIAIFIIAALSGLVSFIPGGF) form a helical membrane-spanning segment. The Extracellular portion of the chain corresponds to 251-271 (GAFDLVVLLGFKTLGVPEEKV). The chain crosses the membrane as a helical span at residues 272–292 (LLMLLLYRFAYYFVPVIIALI). The Cytoplasmic portion of the chain corresponds to 293-337 (LSSFEFGTSAKKYIEGSKYFIPAKDVTSFLMSYQKDIIAKIPSLS). Residues 338–358 (LAILVFFTSMIFFVNNLTIVY) form a helical membrane-spanning segment. Topologically, residues 359–369 (DALYDGNHLTY) are extracellular. Residues 370-390 (YLLLAIHTSACLLLLLNVVGI) traverse the membrane as a helical segment. Over 391–394 (YKQS) the chain is Cytoplasmic. 2 helical membrane-spanning segments follow: residues 395-415 (RRAI…TLFT) and 416-436 (YASY…IVAF). Residues 437–450 (RRARRLKRPIRMRN) are Cytoplasmic-facing. The chain crosses the membrane as a helical span at residues 451 to 471 (LVAMLLFSIFILYINHIFIAG). At 472–489 (TFYALDVYTIEMHTSVLK) the chain is on the extracellular side. Residues 490-510 (YYFWITILIIAIIVGAIAWLF) traverse the membrane as a helical segment. Residues 511-840 (DYQFSKVRIS…SKVMRVIRHK (330 aa)) are Cytoplasmic-facing.

It belongs to the LPG synthase family.

It is found in the cell membrane. It catalyses the reaction L-lysyl-tRNA(Lys) + a 1,2-diacyl-sn-glycero-3-phospho-(1'-sn-glycerol) = a 1,2-diacyl-sn-glycero-3-phospho-1'-(3'-O-L-lysyl)-sn-glycerol + tRNA(Lys). Catalyzes the transfer of a lysyl group from L-lysyl-tRNA(Lys) to membrane-bound phosphatidylglycerol (PG), which produces lysylphosphatidylglycerol (LPG), a major component of the bacterial membrane with a positive net charge. LPG synthesis contributes to bacterial virulence as it is involved in the resistance mechanism against cationic antimicrobial peptides (CAMP) produces by the host's immune system (defensins, cathelicidins) and by the competing microorganisms (bacteriocins). In fact, the modification of anionic phosphatidylglycerol with positively charged L-lysine results in repulsion of the peptides. This is Phosphatidylglycerol lysyltransferase (mprF) from Staphylococcus aureus (strain MRSA252).